The sequence spans 305 residues: Uridylate-specific endoribonuclease D (305 aa).

A signal peptide spans 1 to 17 (MKVYFVFLCLLPSLISG). The EndoU domain maps to 33 to 305 (SNAEIQSLAE…RYVASSYPNI (273 aa)). Active-site residues include His-182, His-197, and Lys-240. A glycan (N-linked (GlcNAc...) asparagine) is linked at Asn-288.

The protein belongs to the ENDOU family. As to quaternary structure, monomer. The cofactor is Mn(2+).

It localises to the secreted. It carries out the reaction ribonucleotidyl-uridine-RNA = a 5'-end dephospho-uridine-RNA + a 3'-end 2',3'-cyclophospho-ribonucleotide-RNA. Endoribonuclease that cleaves single-stranded RNAs at 5' of uridylates and releases a product with a 2',3'-cyclic phosphate at the 3'-end. This chain is Uridylate-specific endoribonuclease D (endou-d), found in Xenopus laevis (African clawed frog).